A 673-amino-acid polypeptide reads, in one-letter code: Synaptotagmin-like protein 4 (673 aa).

Residues 4–122 enclose the RabBD domain; the sequence is ILDLSFLSEM…KATGDWFYDQ (119 aa). The segment at 63 to 105 adopts an FYVE-type zinc-finger fold; that stretch reads CARCQEGLGRLIPKSSTCVGCNHLVCRECRVLESNGSWRCKVC. The tract at residues 184–253 is disordered; that stretch reads FEVPKTRSGK…PGNQNAVCGD (70 aa). 5 positions are modified to phosphoserine: serine 202, serine 205, serine 218, serine 222, and serine 275. The C2 1 domain occupies 358–480; that stretch reads VTGKIAFSLK…KLDKKLDHCL (123 aa). A Phosphoserine modification is found at serine 490. Residues 509 to 635 enclose the C2 2 domain; that stretch reads PASKLPVGGD…ISNGEVVDWM (127 aa).

As to quaternary structure, part of a ternary complex containing STX1A and RAB27A. Can bind both dominant negative and dominant active mutants of RAB27A. Binds STXBP1, RAB3A, RAB8A and RAB27B. Interacts with MYO5A. Detected in the pancreatic islet, in particular in insulin-positive beta cells, and in pituitary.

It localises to the membrane. Its subcellular location is the cytoplasmic vesicle. The protein resides in the secretory vesicle membrane. Its function is as follows. Modulates exocytosis of dense-core granules and secretion of hormones in the pancreas and the pituitary. Interacts with vesicles containing negatively charged phospholipids in a Ca(2+)-independent manner. In Mus musculus (Mouse), this protein is Synaptotagmin-like protein 4 (Sytl4).